The chain runs to 82 residues: Small ribosomal subunit protein uS17 (82 aa).

It belongs to the universal ribosomal protein uS17 family. Part of the 30S ribosomal subunit.

Functionally, one of the primary rRNA binding proteins, it binds specifically to the 5'-end of 16S ribosomal RNA. The chain is Small ribosomal subunit protein uS17 from Thermosynechococcus vestitus (strain NIES-2133 / IAM M-273 / BP-1).